A 258-amino-acid chain; its full sequence is Tryptophan synthase alpha chain (258 aa).

Catalysis depends on proton acceptor residues Glu-47 and Asp-58.

It belongs to the TrpA family. As to quaternary structure, tetramer of two alpha and two beta chains.

It catalyses the reaction (1S,2R)-1-C-(indol-3-yl)glycerol 3-phosphate + L-serine = D-glyceraldehyde 3-phosphate + L-tryptophan + H2O. Its pathway is amino-acid biosynthesis; L-tryptophan biosynthesis; L-tryptophan from chorismate: step 5/5. In terms of biological role, the alpha subunit is responsible for the aldol cleavage of indoleglycerol phosphate to indole and glyceraldehyde 3-phosphate. The polypeptide is Tryptophan synthase alpha chain (Bacillus cereus (strain ZK / E33L)).